Here is a 369-residue protein sequence, read N- to C-terminus: Tetraacyldisaccharide 4'-kinase (369 aa).

68 to 75 contributes to the ATP binding site; that stretch reads VVGGTGKT.

It belongs to the LpxK family.

It carries out the reaction a lipid A disaccharide + ATP = a lipid IVA + ADP + H(+). It functions in the pathway glycolipid biosynthesis; lipid IV(A) biosynthesis; lipid IV(A) from (3R)-3-hydroxytetradecanoyl-[acyl-carrier-protein] and UDP-N-acetyl-alpha-D-glucosamine: step 6/6. In terms of biological role, transfers the gamma-phosphate of ATP to the 4'-position of a tetraacyldisaccharide 1-phosphate intermediate (termed DS-1-P) to form tetraacyldisaccharide 1,4'-bis-phosphate (lipid IVA). This chain is Tetraacyldisaccharide 4'-kinase, found in Chlamydia trachomatis serovar D (strain ATCC VR-885 / DSM 19411 / UW-3/Cx).